We begin with the raw amino-acid sequence, 5058 residues long: ATP-binding cassette sub-family A member 13 (5058 aa).

Helical transmembrane passes span 23–43 (PVLF…LTVL), 3568–3588 (VGFF…ASMV), 3607–3627 (GVHP…VLTI), 3648–3668 (FIVF…SYLL), 3679–3699 (ALCT…LLVL), 3709–3729 (TFLC…ITFL), and 3752–3772 (FGWV…CGWY). Residues 3842–4074 (VTLVSVTKEY…YGQGLRLTLT (233 aa)) enclose the ABC transporter 1 domain. 3875 to 3882 (GTNGAGKT) lines the ATP pocket. Transmembrane regions (helical) follow at residues 4226–4246 (TLAD…LFMV), 4458–4478 (VALC…SSVV), 4504–4524 (FLYD…VIVA), 4536–4556 (LAAT…WMYL), 4568–4588 (FISY…ITIM), 4607–4627 (VLKW…LVEL), and 4651–4671 (MNFL…LLLL). Residues 4718-4956 (LVLYNLSKHY…FGDGYTVKVW (239 aa)) enclose the ABC transporter 2 domain. 4754–4761 (GVNGAGKS) serves as a coordination point for ATP.

This sequence belongs to the ABC transporter superfamily. Significantly expressed in the bone marrow, trachea, testis, thyroid and lung as well as in skin fibroblasts.

It localises to the cytoplasmic vesicle membrane. The enzyme catalyses cholesterol(in) + ATP + H2O = cholesterol(out) + ADP + phosphate + H(+). Its function is as follows. May mediate the cholesterol and gangliosides transport from the plasma membrane to intracellular vesicles in an ATP hydrolysis dependent manner, thus playing a role in their internalization by endocytic retrograde transport and may also participate in the endocytosis of synaptic vesicle in cortical neurons. This Homo sapiens (Human) protein is ATP-binding cassette sub-family A member 13.